A 199-amino-acid polypeptide reads, in one-letter code: Casparian strip membrane protein 2 (199 aa).

Residues 1–37 (MMRGSTEIDMPESSSVSKGTAPLIAAPMKEKGGYKKG) are Cytoplasmic-facing. The chain crosses the membrane as a helical span at residues 38–58 (IAIFDFILRLAAIATALAAAA). The Extracellular portion of the chain corresponds to 59-87 (SMGTSDETLPFFTQFFQFQASYDDLPTFQ). The chain crosses the membrane as a helical span at residues 88-108 (FFVIAMAIVAGYLVLSLPFSI). The Cytoplasmic segment spans residues 109-120 (VAIVRPHAAGPR). A helical transmembrane segment spans residues 121–141 (LLLIILDTVALTLNTAAGAAA). Over 142–173 (AAIVYLAHNGNSSTNWLAICQQFGDFCQKNSG) the chain is Extracellular. N152 carries an N-linked (GlcNAc...) asparagine glycan. Residues 174 to 194 (AVVASFITVVIFVFLLVLSAF) traverse the membrane as a helical segment. Residues 195 to 199 (ALRRH) are Cytoplasmic-facing.

It belongs to the Casparian strip membrane proteins (CASP) family. Homodimer and heterodimers.

Its subcellular location is the cell membrane. Its function is as follows. Regulates membrane-cell wall junctions and localized cell wall deposition. Required for establishment of the Casparian strip membrane domain (CSD) and the subsequent formation of Casparian strips, a cell wall modification of the root endodermis that determines an apoplastic barrier between the intraorganismal apoplasm and the extraorganismal apoplasm and prevents lateral diffusion. The polypeptide is Casparian strip membrane protein 2 (Populus trichocarpa (Western balsam poplar)).